Here is a 159-residue protein sequence, read N- to C-terminus: Fimbrial protein MyfA (159 aa).

An N-terminal signal peptide occupies residues 1 to 29 (MNMKKFVKKPLAIAVLMLASGGMVNMVHA).

In terms of assembly, forms a homomer composed of subunits assembled in a large structure resistant to proteases and chaotropic agents.

The protein localises to the fimbrium. Its function is as follows. Major pilus subunit. Expressed only in pathogenic serotypes, it is part of myf, a probable virulence factor. The sequence is that of Fimbrial protein MyfA (myfA) from Yersinia enterocolitica.